The following is a 360-amino-acid chain: MVWLRLWAFLHILAIVTLDPELKRREELFLRSLGFSSKPNPVSPPPVPSILWRIFNQRMGSSIQKKKPDLCFVEEFNVPGSVIRVFPDQGRFIIPYSDDIHPTQCLEKRLFFNISAIEKEERVTMGSGIEVQPEHLLRKGIDLRLYRTLQITLKGMGRSKTSRKLLVAQTFRLLHKSLFFNLTEICQSWQDPLKNLGLVLEIFPKKESSWMSTANDECKDIQTFLYTSLLTVTLNPLRCKRPRRKRSYSKLPFTASNICKKRHLYVEFKDVGWQNWVIAPQGYMANYCYGECPYPLTEILNGSNHAILQTLVHSIEPEDIPLPCCVPTKMSPISMLFYDNNDNVVLRHYENMAVDECGCR.

The first 16 residues, 1 to 16 (MVWLRLWAFLHILAIV), serve as a signal peptide directing secretion. The propeptide occupies 17 to 246 (TLDPELKRRE…LRCKRPRRKR (230 aa)). Asparagine 113, asparagine 181, and asparagine 301 each carry an N-linked (GlcNAc...) asparagine glycan. Intrachain disulfides connect cysteine 259–cysteine 325, cysteine 288–cysteine 357, and cysteine 292–cysteine 359.

This sequence belongs to the TGF-beta family. As to quaternary structure, homodimer. In terms of tissue distribution, vegetal region of the egg.

Its subcellular location is the secreted. Serves to facilitate the differentiation of either mesoderm or endoderm either as a cofactor in an instructive signal or by providing permissive environment. The polypeptide is Protein DVR-1 (dvr1) (Xenopus laevis (African clawed frog)).